A 182-amino-acid chain; its full sequence is Large ribosomal subunit protein uL5 (182 aa).

The protein belongs to the universal ribosomal protein uL5 family. In terms of assembly, part of the 50S ribosomal subunit; part of the 5S rRNA/L5/L18/L25 subcomplex. Contacts the 5S rRNA and the P site tRNA. Forms a bridge to the 30S subunit in the 70S ribosome.

Functionally, this is one of the proteins that bind and probably mediate the attachment of the 5S RNA into the large ribosomal subunit, where it forms part of the central protuberance. In the 70S ribosome it contacts protein S13 of the 30S subunit (bridge B1b), connecting the 2 subunits; this bridge is implicated in subunit movement. Contacts the P site tRNA; the 5S rRNA and some of its associated proteins might help stabilize positioning of ribosome-bound tRNAs. The protein is Large ribosomal subunit protein uL5 of Mycoplasma mobile (strain ATCC 43663 / 163K / NCTC 11711) (Mesomycoplasma mobile).